The chain runs to 555 residues: O-fucosyltransferase 20 (555 aa).

The Cytoplasmic segment spans residues 1 to 58; that stretch reads MALPKNGGNSSSTKKKVSYISVPSQIINSLSSSSLQSLLVSPKKSSRCTNRFSYRNPR. Residues 59 to 79 form a helical; Signal-anchor for type II membrane protein membrane-spanning segment; the sequence is IWFLTLFLVSLFGMLKLGLNV. Over 80–555 the chain is Lumenal; it reads DPISLPFSRY…MCSDRRQQQQ (476 aa). Residues 110-130 are disordered; sequence KNDTQSSSSSEHRKNETLPTE. Asparagine 111 and asparagine 124 each carry an N-linked (GlcNAc...) asparagine glycan. Position 330–332 (330–332) interacts with substrate; it reads HLR. Residues asparagine 371 and asparagine 503 are each glycosylated (N-linked (GlcNAc...) asparagine). Residues 525-555 are disordered; that stretch reads QPELRTGRGGKDVTKHPVSECMCSDRRQQQQ. Basic and acidic residues predominate over residues 529-555; that stretch reads RTGRGGKDVTKHPVSECMCSDRRQQQQ.

Belongs to the glycosyltransferase GT106 family. In terms of tissue distribution, highly expressed in embryogenic microspore and in vegetative tissues.

Its subcellular location is the golgi apparatus membrane. Its pathway is glycan metabolism. In terms of biological role, may play a role in the biosynthesis of matrix polysaccharides and contribute to the biomechanics and development of the plant cell wall. The polypeptide is O-fucosyltransferase 20 (Brassica napus (Rape)).